A 1395-amino-acid chain; its full sequence is MKDIFNFFEKPKDPLSFSAIRISLASPDKIRQWSHGEVKKPETINYRTFKPERDGLFCAKIFGPVKDYECNCGKYKRMKHRGVVCEKCGVEVIQSKVRRERLGHITLATPVAHIWFLKSLPSRIGNLLDITLKDLEKVLYCESYIVIDPKETTLQRGELLSEDRYHKSMEEFGEEAFLAGMGGEAVLELLKVVGPADKGHGEGVHGLADELRAQMKEATSDAKRKKIAKRLKVVEAFVQSGNKPDWMMLEVIPVIPPDLRPLVPLDGGRFATSDLNDLYRRVINRNNRLKRLQELNAPDIIIRNEKRMLQEAVDALFDNGRRGKTITGPNKRPLKSLSDMLKGKQGRFRQNLLGKRVDYSGRSVIVVGPELKLHQCGLPKIMALELFKPFIYNKLEEKGYVTTIKSAKKMVEKERPEVWDILDEVIREHPVLLNRAPTLHRLGIQAFEPVLIEGKAIQLHPLVCTAFNADFDGDQMAVHVPLSIEAQMEARVLMMSTNNILSPAHGKPIIVPSQDIVLGIYYMTRERAFARGEGKVFASEEEVRAAYDQGEVDLQAKIWVRLDGKRVETTVGRVLLYDIVPKRLPFESINKVMDKKQLQNLIDLTYRLCGEKETVLLADRVRSMGYGNATRAGISIALENMIIPRKKQELLERAMGEVDDIQTQYTEGLITIGERYNKVIDIWAQVTEEVAQEMMSQIGQETAIGTGKDGKREERKQPSFNPIYIMADSGARGSAQQIRQLAGMRGLMAKPSGEIIETPITANFREGLNVLQYFISTHGARKGLADTALKTANSGYLTRRLVDVAQDAIITEYDCGAMDGITLGALVEGGEIIEPMGERILGRVALDDIHDPFASSVLVKANEEIDESKVKLIENAGIDKVKIRSVLTCQARRGICVECYGRDLARGRKVNIGEAVGVIAAQSIGEPGTQLTMRTFHIGGAASRRAEQSTIENRNPGLVKFHNVAVAKKKDGTLIVMNRNGEIIVTDDQGRERERYGVVYGAKLLVRDGQKIETSTLLAEWDPYSMPIITEVAGHVKYGDLVDGVTISEQVDEITGLARKAVIASKDPDARPRISIKDDQGKTRKLANSEADARYMLPEGANLVVNDGDEVDAGDVIAKMPRETTKTKDITGGLPRVAELFEARKPKEHAVISEIDGVVAFGKDTKGKRKVVITPEVDGKLRPDLAKEYLIGKGKHISVHTGDRVRAGEALMDGAANPHDILRVLGEKELARWLVDEVQEVYRLQGVKINDKHIETIVRQMLRRVRIVDVGDTNFLADEQVEKFVFEEENDKVITAGGRPAQGEPLLLGITKASLSTESFISASSFQETTKVLTEAAISGKVDHLRGLKENVIMGRLIPAGTGLPHYKHLDIEVETPVDAVEEAEEALAVASGEE.

Zn(2+) contacts are provided by Cys70, Cys72, Cys85, and Cys88. Residues Asp470, Asp472, and Asp474 each coordinate Mg(2+). Zn(2+) contacts are provided by Cys815, Cys889, Cys896, and Cys899.

The protein belongs to the RNA polymerase beta' chain family. As to quaternary structure, the RNAP catalytic core consists of 2 alpha, 1 beta, 1 beta' and 1 omega subunit. When a sigma factor is associated with the core the holoenzyme is formed, which can initiate transcription. Mg(2+) serves as cofactor. Zn(2+) is required as a cofactor.

The catalysed reaction is RNA(n) + a ribonucleoside 5'-triphosphate = RNA(n+1) + diphosphate. DNA-dependent RNA polymerase catalyzes the transcription of DNA into RNA using the four ribonucleoside triphosphates as substrates. The chain is DNA-directed RNA polymerase subunit beta' from Anaeromyxobacter sp. (strain Fw109-5).